The chain runs to 119 residues: MSEEKDTPLEAFASLKHSGVTPQKVRRIVDLIRGRSVDEALAILRFSPHSASGILYKLIVSAQANYANLLGRDDDLFVSSVYVDEGKTYKRGRPRARGSSSRILKRGSHVTVTLSKEVR.

Belongs to the universal ribosomal protein uL22 family. In terms of assembly, part of the 50S ribosomal subunit.

In terms of biological role, this protein binds specifically to 23S rRNA; its binding is stimulated by other ribosomal proteins, e.g. L4, L17, and L20. It is important during the early stages of 50S assembly. It makes multiple contacts with different domains of the 23S rRNA in the assembled 50S subunit and ribosome. Its function is as follows. The globular domain of the protein is located near the polypeptide exit tunnel on the outside of the subunit, while an extended beta-hairpin is found that lines the wall of the exit tunnel in the center of the 70S ribosome. The protein is Large ribosomal subunit protein uL22 of Tropheryma whipplei (strain TW08/27) (Whipple's bacillus).